Reading from the N-terminus, the 506-residue chain is MANKLLALSLFLLFSGCFASTFRQQPQQNECQFQRLNALEPDNSVKSEAGTIETWNPNNDQLRCAGVALSRCTIQRNGLRRPFYTNAPQEIYIQQGRGIFGLIFPGCRETYEEPQEQEQGQGPRPQDRHQKVEHFREGDIIAVPTGVPFWMYNNEQTPVIAITLIDTTNLDNQLDQIPRRFYLSGNQEQEFLQYQQKEGGQGQQQEGGNEGGNVLSGFNDEFLEEAFSVDREIVRNIKGKNDDREGSIVEVKEGLKVISPPTLRPRQGREEEEEEEEEEEERRGDRRRHRPHHHEEEEEEEEWSHQVRRVRRPHHHREDRNGLEETLCTLKLRHNIGQSTSPDAYNPQAGRLKTLTSLDFPILRWLGLAAEHGSIYKNAMFVPYYNVNANSILYVLNGSAWFQVVDCSGNAVFNGELNEGQVLTIPQNYAVAIKSLDDNFSYVAFKTNDIPQIAALAGLTSSIRALPLDVVAHAFNLDRDQARQLKNNNPYKFLVPPPQSQLRAVA.

Residues 1 to 19 (MANKLLALSLFLLFSGCFA) form the signal peptide. 2 disulfide bridges follow: cysteine 31–cysteine 64 and cysteine 107–cysteine 328. Positions 36–235 (LNALEPDNSV…AFSVDREIVR (200 aa)) constitute a Cupin type-1 1 domain. 3 disordered regions span residues 111–131 (YEEP…RHQK), 195–216 (QQKE…NVLS), and 251–322 (VKEG…DRNG). Over residues 195 to 207 (QQKEGGQGQQQEG) the composition is skewed to low complexity. Positions 270 to 280 (EEEEEEEEEEE) are enriched in acidic residues. Residues 306–315 (QVRRVRRPHH) show a composition bias toward basic residues. The Cupin type-1 2 domain occupies 334-483 (HNIGQSTSPD…AFNLDRDQAR (150 aa)). 2 N-linked (GlcNAc...) asparagine glycosylation sites follow: asparagine 397 and asparagine 439.

The protein belongs to the 11S seed storage protein (globulins) family. In terms of assembly, hexamer; each subunit is composed of an acidic and a basic chain derived from a single precursor and linked by a disulfide bond. Component of globulins complexes which accumulate in seeds. Expressed in developing cotyledons and in the embryonic axis of germinating seeds.

In terms of biological role, sulfur-rich seed storage protein. This protein found in the seeds of many leguminous and non-leguminous plants is the source of sulfur-containing amino acids in seed meals. This chain is Conglutin alpha 1, found in Lupinus angustifolius (Narrow-leaved blue lupine).